Consider the following 832-residue polypeptide: DEAD-box ATP-dependent RNA helicase 13 (832 aa).

The span at 1–12 shows a compositional bias: pro residues; sequence MAAAPPPPPPPQ. 2 disordered regions span residues 1–59 and 91–173; these read MAAA…TMVE and VEDL…DDNV. A compositionally biased stretch (basic residues) spans 29 to 42; that stretch reads RKGKKSRGAKKPRR. The span at 43–55 shows a compositional bias: low complexity; sequence AAAAAAASTSSAG. A compositionally biased stretch (basic residues) spans 105–114; the sequence is QKKKKRKKRK. Acidic residues predominate over residues 128–137; it reads LVVECEEEGE. Over residues 141–155 the composition is skewed to basic residues; that stretch reads KRVKKKRRSRKKRKV. A compositionally biased stretch (basic and acidic residues) spans 156–167; the sequence is KEMEEKMESKED. The short motif at 198–226 is the Q motif element; that stretch reads YAWRELRLHPLLITAVRRLGFKEPTPIQK. In terms of domain architecture, Helicase ATP-binding spans 230-447; that stretch reads PAAAHQGKDV…KLKRGLVTAK (218 aa). Residue 243-250 participates in ATP binding; the sequence is AETGSGKT. A DEAD box motif is present at residues 371-374; sequence DEAD. Residues 484–645 enclose the Helicase C-terminal domain; the sequence is KLEESFIECS…QFPVDHAYMP (162 aa). The interval 800–832 is disordered; the sequence is RRLAENWRRKKQKEKKSTREQKRKEKRIAKERD. Over residues 814 to 832 the composition is skewed to basic and acidic residues; that stretch reads KKSTREQKRKEKRIAKERD.

It belongs to the DEAD box helicase family. DDX24/MAK5 subfamily.

The catalysed reaction is ATP + H2O = ADP + phosphate + H(+). The polypeptide is DEAD-box ATP-dependent RNA helicase 13 (Oryza sativa subsp. japonica (Rice)).